Reading from the N-terminus, the 251-residue chain is Hydroxyacylglutathione hydrolase (251 aa).

The Zn(2+) site is built by H53, H55, D57, H58, H110, D127, and H165.

This sequence belongs to the metallo-beta-lactamase superfamily. Glyoxalase II family. In terms of assembly, monomer. Requires Zn(2+) as cofactor.

It carries out the reaction an S-(2-hydroxyacyl)glutathione + H2O = a 2-hydroxy carboxylate + glutathione + H(+). Its pathway is secondary metabolite metabolism; methylglyoxal degradation; (R)-lactate from methylglyoxal: step 2/2. Thiolesterase that catalyzes the hydrolysis of S-D-lactoyl-glutathione to form glutathione and D-lactic acid. This Escherichia coli O45:K1 (strain S88 / ExPEC) protein is Hydroxyacylglutathione hydrolase.